Reading from the N-terminus, the 334-residue chain is S-adenosylmethionine:tRNA ribosyltransferase-isomerase (334 aa).

This sequence belongs to the QueA family. As to quaternary structure, monomer.

It is found in the cytoplasm. It catalyses the reaction 7-aminomethyl-7-carbaguanosine(34) in tRNA + S-adenosyl-L-methionine = epoxyqueuosine(34) in tRNA + adenine + L-methionine + 2 H(+). It functions in the pathway tRNA modification; tRNA-queuosine biosynthesis. Its function is as follows. Transfers and isomerizes the ribose moiety from AdoMet to the 7-aminomethyl group of 7-deazaguanine (preQ1-tRNA) to give epoxyqueuosine (oQ-tRNA). The sequence is that of S-adenosylmethionine:tRNA ribosyltransferase-isomerase from Aquifex aeolicus (strain VF5).